The chain runs to 567 residues: Proline--tRNA ligase (567 aa).

The protein belongs to the class-II aminoacyl-tRNA synthetase family. ProS type 1 subfamily. Homodimer.

It is found in the cytoplasm. It catalyses the reaction tRNA(Pro) + L-proline + ATP = L-prolyl-tRNA(Pro) + AMP + diphosphate. Catalyzes the attachment of proline to tRNA(Pro) in a two-step reaction: proline is first activated by ATP to form Pro-AMP and then transferred to the acceptor end of tRNA(Pro). As ProRS can inadvertently accommodate and process non-cognate amino acids such as alanine and cysteine, to avoid such errors it has two additional distinct editing activities against alanine. One activity is designated as 'pretransfer' editing and involves the tRNA(Pro)-independent hydrolysis of activated Ala-AMP. The other activity is designated 'posttransfer' editing and involves deacylation of mischarged Ala-tRNA(Pro). The misacylated Cys-tRNA(Pro) is not edited by ProRS. This is Proline--tRNA ligase from Staphylococcus aureus (strain COL).